Here is a 661-residue protein sequence, read N- to C-terminus: Potassium voltage-gated channel subfamily KQT member 1 (661 aa).

Disordered stretches follow at residues 1 to 29 (MAAASTPPRAERKRXSWSRLPGAQRESAG) and 42 to 88 (ESGP…SLDP). At 1–119 (MAAASTPPRA…YNFLERPTGW (119 aa)) the chain is on the cytoplasmic side. Serine 27 carries the phosphoserine; by PKA modification. The span at 54–85 (VSPPSAPEPAPPASPASPAPPAADQGPQPPVS) shows a compositional bias: pro residues. Residues 120 to 141 (KCFAYHFTVFLIVLVCLIFSVL) form a helical membrane-spanning segment. Topologically, residues 142–152 (STIEQYATLAT) are extracellular. The helical transmembrane segment at 153–175 (GTLFWMEIVLVVFFGTEYVVRLW) threads the bilayer. Residues 176-191 (SAGCRSKYVGLWGRLR) are Cytoplasmic-facing. A helical transmembrane segment spans residues 192–217 (FARKPISIIDLIVVVASMVVLCVGSK). Topologically, residues 218–225 (GQVFATSA) are extracellular. Residues 226 to 241 (IRGIRFLQILRMLHVD) traverse the membrane as a helical; Voltage-sensor segment. Residues 237-245 (MLHVDRQGG) are interaction with KCNE3. The Cytoplasmic portion of the chain corresponds to 242–259 (RQGGTWRLLGSVVFIHRQ). Residue glutamine 243 coordinates a 1,2-diacyl-sn-glycero-3-phospho-(1D-myo-inositol-4,5-bisphosphate). Residues 260 to 282 (ELITTLYIGFLGLIFSSYFVYLA) form a helical membrane-spanning segment. The Extracellular segment spans residues 283 to 298 (EKDAVNESGRVEFGSY). Asparagine 288 is a glycosylation site (N-linked (GlcNAc...) asparagine). Positions 299-319 (ADALWWGVVTVTTIGYGDKVP) form an intramembrane region, pore-forming. Residues 320 to 321 (QT) are Extracellular-facing. The chain crosses the membrane as a helical span at residues 322–347 (WVGKTIASCFSVFAISFFALPAGILG). Over 348–661 (SGFALKVQQK…VPRRDPEEGS (314 aa)) the chain is Cytoplasmic. The interaction with CALM stretch occupies residues 369 to 381 (AAASLIQTAWRCY). A phosphoserine mark is found at serine 406 and serine 408. Residues 514-528 (KVIRRMQYFVAKKKF) form an interaction with CALM; calcium-dependent region. The segment at 534–571 (PYDVRDVIEQYSQGHLNLMVRIKELQRRLDQSIGKPSL) is interaction with KCNE1 C-terminus. The stretch at 584-620 (SNSIGARLNRVEDKVTQLDQRLVLIADMLQQLLALHQ) forms a coiled coil. The interval 587-615 (IGARLNRVEDKVTQLDQRLVLIADMLQQL) is interaction with AKAP9. The tract at residues 588–619 (GARLNRVEDKVTQLDQRLVLIADMLQQLLALH) is C-terminal assembly domain (tetramerization). The interval 624–661 (HGGAHPAQARDGDPADPELFLPTYEQLTVPRRDPEEGS) is disordered.

This sequence belongs to the potassium channel family. KQT (TC 1.A.1.15) subfamily. Kv7.1/KCNQ1 sub-subfamily. In terms of assembly, tetramer. Heterotetramer with KCNE1; targets to the membrane raft. Interacts (via C-terminus) with CALM; forms a heterooctameric structure (with 4:4 KCNQ1:CALM stoichiometry) in a calcium-independent manner. Interacts with AKAP9; targets protein kinase A (PKA) catalytic and regulatory subunits and protein phosphatase 1 (PP1) to the KCNQ1-KCNE1 complex, allowing PKA-mediated phosphorylation and increase of delayed rectifier potassium channel activity. Interacts with KCNE2; form a heterooligomer complex that targets to the membrane raft and leading to currents with an apparently instantaneous activation, a rapid deactivation process and a linear current-voltage relationship and decreases the amplitude of the outward current. Interacts with AP2M1; mediates estrogen-induced internalization via clathrin-coated vesicles. Interacts with NEDD4L; promotes internalization and decreases I(Ks) currents. Interacts with USP2; counteracts the NEDD4L-specific down-regulation of I(Ks) and restore plasma membrane localization. Heterotetramer with KCNQ5; has a voltage-gated potassium channel activity. Interacts with KCNE3; four KCNE3 molecules are bound to one KCNQ1 tetramer (4:4 KCNQ1:KCNE3 stoichiometry); alters membrane raft localization; affects KCNQ1 structure and gating properties. Interacts with KCNE4; impairs KCNQ1 localization in lipid rafts and inhibits voltage-gated potassium channel activity. Interacts with KCNE5; impairs KCNQ1 localization in lipid rafts and only conducts current upon strong and continued depolarization. Interacts with SLC5A3; forms coregulatory channel-transporter complexes that modulate Na(+)-coupled myo-inositol influx through the transporter. Phosphorylation at Ser-27 by PKA; increases delayed rectifier potassium channel activity of the KCNQ1-KCNE1 complex through a macromolecular complex that includes PKA, PP1, and the targeting protein AKAP9. In terms of processing, ubiquitinated by NEDD4L; promotes internalization. The ubiquitinylated form is internalized through a clathrin-mediated endocytosis by interacting with AP2M1 and is recycled back to the cell membrane via RAB4A and RAB11A. Post-translationally, deubiquitinated by USP2; counteracts the NEDD4L-specific down-regulation of I(Ks) and restores the membrane localization.

Its subcellular location is the cell membrane. It is found in the cytoplasmic vesicle membrane. It localises to the early endosome. The protein resides in the membrane raft. The protein localises to the endoplasmic reticulum. Its subcellular location is the basolateral cell membrane. It is found in the apical cell membrane. The enzyme catalyses K(+)(in) = K(+)(out). PIP2 molecule is essential to activate KCNQ channels by inducing the coupling of the voltage-sensing domain (VSD) and the pore-forming domain (PD). Upon channel activation, PIP2 disrupts the VSD-calmodulin/CALM interactions, causing the release of CALM from the VSD which triggers the opening of the gate. Calcium potentiates KCNQ1 channel current through calcium-bound CALM. Calcium-bound CALM competes with PIP2 to stabilize the channel open state. Functionally, pore-forming subunit of the voltage-gated potassium (Kv) channel involved in the regulation of cardiomyocyte excitability and important in normal development and functions of myocardium, inner ear, stomach and colon. Associates with KCNE beta subunits that modulates current kinetics. Induces a voltage-dependent by rapidly activating and slowly deactivating potassium-selective outward current. Also promotes a delayed voltage activated potassium current showing outward rectification characteristic. During beta-adrenergic receptor stimulation participates in cardiac repolarization by associating with KCNE1 to form the I(Ks) cardiac potassium current that increases the amplitude and slows down the activation kinetics of outward potassium current I(Ks). Muscarinic agonist oxotremorine-M strongly suppresses KCNQ1/KCNE1 current. When associated with KCNE3, forms the potassium channel that is important for cyclic AMP-stimulated intestinal secretion of chloride ions. This interaction with KCNE3 is reduced by 17beta-estradiol, resulting in the reduction of currents. During conditions of increased substrate load, maintains the driving force for proximal tubular and intestinal sodium ions absorption, gastric acid secretion, and cAMP-induced jejunal chloride ions secretion. Allows the provision of potassium ions to the luminal membrane of the secretory canaliculus in the resting state as well as during stimulated acid secretion. When associated with KCNE2, forms a heterooligomer complex leading to currents with an apparently instantaneous activation, a rapid deactivation process and a linear current-voltage relationship and decreases the amplitude of the outward current. When associated with KCNE4, inhibits voltage-gated potassium channel activity. When associated with KCNE5, this complex only conducts current upon strong and continued depolarization. Also forms a heterotetramer with KCNQ5 that has a voltage-gated potassium channel activity. Binds with phosphatidylinositol 4,5-bisphosphate. KCNQ1-KCNE2 channel associates with Na(+)-coupled myo-inositol symporter in the apical membrane of choroid plexus epithelium and regulates the myo-inositol gradient between blood and cerebrospinal fluid with an impact on neuron excitability. The sequence is that of Potassium voltage-gated channel subfamily KQT member 1 from Oryctolagus cuniculus (Rabbit).